A 996-amino-acid polypeptide reads, in one-letter code: Protein psiR (996 aa).

The first 21 residues, 1–21 (MKKIILMLLLFSIFFILKSES), serve as a signal peptide directing secretion. N-linked (GlcNAc...) asparagine glycans are attached at residues Asn-79, Asn-117, Asn-323, Asn-396, Asn-428, Asn-474, Asn-500, Asn-645, and Asn-779. In terms of domain architecture, PA14 spans 105 to 250 (QSLSNPNIYS…YDECGVCEGD (146 aa)).

This sequence belongs to the prespore-cell-inducing factor family.

The protein localises to the secreted. The chain is Protein psiR (psiR) from Dictyostelium discoideum (Social amoeba).